Reading from the N-terminus, the 82-residue chain is Small ribosomal subunit protein bS16 (82 aa).

It belongs to the bacterial ribosomal protein bS16 family.

This is Small ribosomal subunit protein bS16 from Bdellovibrio bacteriovorus (strain ATCC 15356 / DSM 50701 / NCIMB 9529 / HD100).